The sequence spans 338 residues: ABC transporter I family member 6, chloroplastic (338 aa).

The N-terminal 66 residues, 1-66 (MAGVNLQLRH…RTTRRSVIVS (66 aa)), are a transit peptide targeting the chloroplast. Residues 92–338 (LEVRDLRAVI…EKEGYKAISG (247 aa)) form the ABC transporter domain. Residue 126–133 (GKNGSGKS) coordinates ATP.

The protein belongs to the ABC transporter superfamily. ABCI family. In terms of assembly, interacts with NAP6. In terms of tissue distribution, present in all organs, with higher levels in aerial parts.

It is found in the plastid. The protein resides in the chloroplast. In terms of biological role, essential protein. Required during embryo development, especially at early stages. Involved in chloroplast differentiation. The polypeptide is ABC transporter I family member 6, chloroplastic (ABCI6) (Arabidopsis thaliana (Mouse-ear cress)).